The chain runs to 410 residues: Argininosuccinate synthase (410 aa).

Residues 11–19 (AYSGGLDTS) and Ala37 contribute to the ATP site. Positions 88 and 93 each coordinate L-citrulline. ATP is bound at residue 116–124 (SHGCTGKGN). L-aspartate is bound by residues Thr120, Asn124, and Asp125. Asn124 provides a ligand contact to L-citrulline. Arg128, Ser181, Ser190, Glu269, and Tyr281 together coordinate L-citrulline.

The protein belongs to the argininosuccinate synthase family. Type 1 subfamily. Homotetramer.

Its subcellular location is the cytoplasm. The enzyme catalyses L-citrulline + L-aspartate + ATP = 2-(N(omega)-L-arginino)succinate + AMP + diphosphate + H(+). Its pathway is amino-acid biosynthesis; L-arginine biosynthesis; L-arginine from L-ornithine and carbamoyl phosphate: step 2/3. This is Argininosuccinate synthase (arg12) from Schizosaccharomyces pombe (strain 972 / ATCC 24843) (Fission yeast).